The primary structure comprises 41 residues: Competence-stimulating peptide type 2 (41 aa).

Positions 1 to 24 (MKNTVKLEQFVALKEKDLQKIKGG) are excised as a propeptide.

It belongs to the ComC family.

The protein localises to the secreted. Acts as a pheromone, induces cells to develop competence for genetic transformation. The protein is Competence-stimulating peptide type 2 (comC2) of Streptococcus pneumoniae serotype 4 (strain ATCC BAA-334 / TIGR4).